The sequence spans 334 residues: L-lactate dehydrogenase C chain (334 aa).

NAD(+)-binding positions include 30–58 and arginine 100; that span reads GQVGMACAVTILLRELADELALVDVVEDK. Residues arginine 107, asparagine 139, and arginine 170 each coordinate substrate. Asparagine 139 is an NAD(+) binding site. Residue histidine 194 is the Proton acceptor of the active site. Threonine 249 provides a ligand contact to substrate.

This sequence belongs to the LDH/MDH superfamily. LDH family. Homotetramer. As to expression, eye and liver.

Its subcellular location is the cytoplasm. It carries out the reaction (S)-lactate + NAD(+) = pyruvate + NADH + H(+). It participates in fermentation; pyruvate fermentation to lactate; (S)-lactate from pyruvate: step 1/1. This is L-lactate dehydrogenase C chain (ldhc) from Fundulus heteroclitus (Killifish).